A 101-amino-acid chain; its full sequence is Putative monooxygenase Rv0793 (101 aa).

Residues 5-93 (VAVIARFMPR…LTRPVAVTVL (89 aa)) enclose the ABM domain.

Homodimer.

Putative monooygenase that might be involved in antibiotic biosynthesis, or may act as reactive oxygen species scavenger that could help in evading host defenses. This chain is Putative monooxygenase Rv0793, found in Mycobacterium tuberculosis (strain ATCC 25618 / H37Rv).